The primary structure comprises 256 residues: MPITANTLYRDSFNFLRNQIAAILLLALLTAFITVMLNQTFMPASEQLSILSIPENDITSSGNLSISEIVSQMTPEQQMVLLRVSAVATFSALVGNVLLVGGLLTLIAMVSQGRRVSALQAIGLSLPILPRLLVLMFISTLVIQLGLTFFIVPGVAIAIALSLSPIIVTNERMGIFAAMKASAQLAFANVRLIVPAMMLWIAVKLLLLFLISRFTVLPPTIATIVLSTLSNLASALLLVYLFRLYMLLRPVSLDKQ.

The next 6 membrane-spanning stretches (helical) occupy residues 20 to 40 (IAAILLLALLTAFITVMLNQT), 90 to 110 (FSALVGNVLLVGGLLTLIAMV), 118 to 138 (ALQAIGLSLPILPRLLVLMFI), 141 to 161 (LVIQLGLTFFIVPGVAIAIAL), 192 to 212 (LIVPAMMLWIAVKLLLLFLIS), and 221 to 241 (IATIVLSTLSNLASALLLVYL).

The protein belongs to the UPF0259 family.

The protein localises to the cell inner membrane. In Yersinia pestis, this protein is UPF0259 membrane protein YPO2199/y2042/YP_1997.